Consider the following 163-residue polypeptide: Large ribosomal subunit protein uL10 (163 aa).

It belongs to the universal ribosomal protein uL10 family. As to quaternary structure, part of the ribosomal stalk of the 50S ribosomal subunit. The N-terminus interacts with L11 and the large rRNA to form the base of the stalk. The C-terminus forms an elongated spine to which L12 dimers bind in a sequential fashion forming a multimeric L10(L12)X complex.

Functionally, forms part of the ribosomal stalk, playing a central role in the interaction of the ribosome with GTP-bound translation factors. This Haemophilus influenzae (strain ATCC 51907 / DSM 11121 / KW20 / Rd) protein is Large ribosomal subunit protein uL10 (rplJ).